The chain runs to 344 residues: L-rhamnose-proton symporter (344 aa).

10 helical membrane passes run 4–24 (PILL…CFYA), 38–58 (WSLG…WWLL), 68–88 (FDMA…IGNI), 101–121 (MGIG…TPVL), 137–157 (TLLG…AGLL), 175–195 (LILA…MDAA), 214–234 (LPSY…FCFI), 255–275 (LIAN…QFFF), 290–310 (ISWM…GLLF), and 324–344 (LVLG…GMAV).

It belongs to the L-rhamnose transporter (TC 2.A.7.6) family.

It localises to the cell inner membrane. It carries out the reaction L-rhamnopyranose(in) + H(+)(in) = L-rhamnopyranose(out) + H(+)(out). Functionally, uptake of L-rhamnose across the cytoplasmic membrane with the concomitant transport of protons into the cell (symport system). The polypeptide is L-rhamnose-proton symporter (Pectobacterium atrosepticum (strain SCRI 1043 / ATCC BAA-672) (Erwinia carotovora subsp. atroseptica)).